A 429-amino-acid polypeptide reads, in one-letter code: Serine--tRNA ligase (429 aa).

234–236 (TSE) contributes to the L-serine binding site. ATP-binding positions include 265 to 267 (RKE) and Val281. Glu288 provides a ligand contact to L-serine. 352 to 355 (ELVS) lines the ATP pocket. Thr389 provides a ligand contact to L-serine.

This sequence belongs to the class-II aminoacyl-tRNA synthetase family. Type-1 seryl-tRNA synthetase subfamily. Homodimer. The tRNA molecule probably binds across the dimer.

The enzyme catalyses tRNA(Ser) + L-serine + ATP = L-seryl-tRNA(Ser) + AMP + diphosphate + H(+). It catalyses the reaction tRNA(Sec) + L-serine + ATP = L-seryl-tRNA(Sec) + AMP + diphosphate + H(+). It participates in aminoacyl-tRNA biosynthesis; selenocysteinyl-tRNA(Sec) biosynthesis; L-seryl-tRNA(Sec) from L-serine and tRNA(Sec): step 1/1. In terms of biological role, catalyzes the attachment of serine to tRNA(Ser). Is also probably able to aminoacylate tRNA(Sec) with serine, to form the misacylated tRNA L-seryl-tRNA(Sec), which will be further converted into selenocysteinyl-tRNA(Sec). This chain is Serine--tRNA ligase, found in Encephalitozoon cuniculi (strain GB-M1) (Microsporidian parasite).